A 209-amino-acid chain; its full sequence is Uracil phosphoribosyltransferase (209 aa).

5-phospho-alpha-D-ribose 1-diphosphate is bound by residues R79, R104, and 131 to 139 (DPMLATGGS). Residues I194 and 199 to 201 (GDA) contribute to the uracil site. D200 contacts 5-phospho-alpha-D-ribose 1-diphosphate.

This sequence belongs to the UPRTase family. It depends on Mg(2+) as a cofactor.

It catalyses the reaction UMP + diphosphate = 5-phospho-alpha-D-ribose 1-diphosphate + uracil. It functions in the pathway pyrimidine metabolism; UMP biosynthesis via salvage pathway; UMP from uracil: step 1/1. Its activity is regulated as follows. Allosterically activated by GTP. Functionally, catalyzes the conversion of uracil and 5-phospho-alpha-D-ribose 1-diphosphate (PRPP) to UMP and diphosphate. This is Uracil phosphoribosyltransferase from Clostridium novyi (strain NT).